We begin with the raw amino-acid sequence, 232 residues long: MKIGIIGAMEEEVTLLRDKIENRQTLTLGGCEIYTGQLNGTDVALLKSGIGKVAAALGATLLLEHCKPDVIINTGSAGGLASTLKVGDIVVSDEARYHDADVTAFGYEYGQLPGCPAGFKADDKLIAAAEYCIRELNLNAVRGLIVSGDAFINGSVGLAKIRHNFPNAVAVEMEATAIAHVCYNFKVPFVVVRAISDVADQQSHLNFDEFLAVAAKQSTLMVETLVQKLAHG.

The Proton acceptor role is filled by glutamate 12. Substrate-binding positions include glycine 78, isoleucine 152, and methionine 173–glutamate 174. Aspartate 197 serves as the catalytic Proton donor.

It belongs to the PNP/UDP phosphorylase family. MtnN subfamily. As to quaternary structure, homodimer.

It carries out the reaction S-adenosyl-L-homocysteine + H2O = S-(5-deoxy-D-ribos-5-yl)-L-homocysteine + adenine. The enzyme catalyses S-methyl-5'-thioadenosine + H2O = 5-(methylsulfanyl)-D-ribose + adenine. It catalyses the reaction 5'-deoxyadenosine + H2O = 5-deoxy-D-ribose + adenine. It functions in the pathway amino-acid biosynthesis; L-methionine biosynthesis via salvage pathway; S-methyl-5-thio-alpha-D-ribose 1-phosphate from S-methyl-5'-thioadenosine (hydrolase route): step 1/2. In terms of biological role, catalyzes the irreversible cleavage of the glycosidic bond in both 5'-methylthioadenosine (MTA) and S-adenosylhomocysteine (SAH/AdoHcy) to adenine and the corresponding thioribose, 5'-methylthioribose and S-ribosylhomocysteine, respectively. Also cleaves 5'-deoxyadenosine, a toxic by-product of radical S-adenosylmethionine (SAM) enzymes, into 5-deoxyribose and adenine. Thus, is required for in vivo function of the radical SAM enzymes biotin synthase and lipoic acid synthase, that are inhibited by 5'-deoxyadenosine accumulation. In Salmonella arizonae (strain ATCC BAA-731 / CDC346-86 / RSK2980), this protein is 5'-methylthioadenosine/S-adenosylhomocysteine nucleosidase.